The chain runs to 68 residues: Disintegrin EMS11A (68 aa).

In terms of domain architecture, Disintegrin spans 1–65 (NSAHPCCDPV…DCPRNRYKGK (65 aa)). Intrachain disulfides connect cysteine 6-cysteine 29, cysteine 20-cysteine 26, cysteine 25-cysteine 50, and cysteine 38-cysteine 57. The Cell attachment site; atypical (MLD) signature appears at 42 to 44 (MLD).

This sequence belongs to the disintegrin family. Dimeric disintegrin subfamily. As to quaternary structure, heterodimer; disulfide-linked. Expressed by the venom gland.

It is found in the secreted. Poor inhibitor of platelet aggregation. The disintegrin inhibits the adhesion of both the alpha-4/beta-1 (ITGA4/ITGB1) and the alpha-5/beta-1 (ITGA5/ITGB1) integrins to VCAM-1 and fibronectin respectively with almost the same degree of specificity. Inhibition on alpha-IIb/beta-3 (ITGA2B/ITGB3) is low. This chain is Disintegrin EMS11A, found in Echis multisquamatus (Central Asian sand viper).